Consider the following 77-residue polypeptide: Delta-conotoxin GmVIA (77 aa).

A signal peptide spans 1–22 (MKLTCMMIVAVLFLTAWTFVTA). A propeptide spanning residues 23-48 (DDSGNGMEILFPKAGHEMENLEVSNR) is cleaved from the precursor. Intrachain disulfides connect C52–C67, C59–C72, and C66–C76.

This sequence belongs to the conotoxin O1 superfamily. Expressed by the venom duct.

It localises to the secreted. Functionally, delta-conotoxins bind to site 6 of voltage-gated sodium channels (Nav) and inhibit the inactivation process. This toxin shows weak activity on rNav1.2/SCN2A (EC(50)=2.5 uM) and rNav1.4/SCN4A (EC(50)=4.8 uM). In vivo, injection of this peptide in the head region of garden snail induces retraction of the head and body into shell. This is followed by secretion of viscous green slime and a convulsive undulation into and out of the shell. No apparent biological activity was observed when a much greater dose of peptide was injected intraperitoneally into mice. This chain is Delta-conotoxin GmVIA, found in Conus gloriamaris (Glory-of-the-Sea cone).